Here is a 1072-residue protein sequence, read N- to C-terminus: DNA-directed RNA polymerase subunit beta (1072 aa).

It belongs to the RNA polymerase beta chain family. In terms of assembly, in plastids the minimal PEP RNA polymerase catalytic core is composed of four subunits: alpha, beta, beta', and beta''. When a (nuclear-encoded) sigma factor is associated with the core the holoenzyme is formed, which can initiate transcription.

Its subcellular location is the plastid. It localises to the chloroplast. The enzyme catalyses RNA(n) + a ribonucleoside 5'-triphosphate = RNA(n+1) + diphosphate. In terms of biological role, DNA-dependent RNA polymerase catalyzes the transcription of DNA into RNA using the four ribonucleoside triphosphates as substrates. This Oenothera elata subsp. hookeri (Hooker's evening primrose) protein is DNA-directed RNA polymerase subunit beta.